The primary structure comprises 1488 residues: Chromosome partition protein MukB (1488 aa).

34-41 (GGNGAGKS) contacts ATP. 3 coiled-coil regions span residues 326 to 418 (LEAD…QYNQ), 444 to 472 (LDTF…QTAH), and 509 to 602 (RHLA…RRAP). Positions 666–783 (PGGAEDQRLN…SLPIFGRAAR (118 aa)) are flexible hinge. Coiled coils occupy residues 835 to 923 (EAEI…AKLE), 977 to 1116 (EMLS…AKAG), and 1209 to 1265 (VEAI…LQSV). The tract at residues 1049–1074 (ADSGAEERARQRRDELHAQLSNNRSR) is disordered. The span at 1051–1065 (SGAEERARQRRDELH) shows a compositional bias: basic and acidic residues.

Belongs to the SMC family. MukB subfamily. As to quaternary structure, homodimerization via its hinge domain. Binds to DNA via its C-terminal region. Interacts, and probably forms a ternary complex, with MukE and MukF via its C-terminal region. The complex formation is stimulated by calcium or magnesium. Interacts with tubulin-related protein FtsZ.

It localises to the cytoplasm. The protein localises to the nucleoid. Functionally, plays a central role in chromosome condensation, segregation and cell cycle progression. Functions as a homodimer, which is essential for chromosome partition. Involved in negative DNA supercoiling in vivo, and by this means organize and compact chromosomes. May achieve or facilitate chromosome segregation by condensation DNA from both sides of a centrally located replisome during cell division. The chain is Chromosome partition protein MukB from Salmonella agona (strain SL483).